Reading from the N-terminus, the 278-residue chain is Glutamate racemase (278 aa).

Substrate-binding positions include 25-26 (DS) and 57-58 (YG). The active-site Proton donor/acceptor is C89. 90 to 91 (NT) serves as a coordination point for substrate. C204 (proton donor/acceptor) is an active-site residue. 205-206 (TH) provides a ligand contact to substrate.

This sequence belongs to the aspartate/glutamate racemases family.

It carries out the reaction L-glutamate = D-glutamate. It functions in the pathway cell wall biogenesis; peptidoglycan biosynthesis. Functionally, provides the (R)-glutamate required for cell wall biosynthesis. The protein is Glutamate racemase of Brucella anthropi (strain ATCC 49188 / DSM 6882 / CCUG 24695 / JCM 21032 / LMG 3331 / NBRC 15819 / NCTC 12168 / Alc 37) (Ochrobactrum anthropi).